The sequence spans 160 residues: Cyanate hydratase (160 aa).

Residues arginine 100, glutamate 103, and serine 126 contribute to the active site.

This sequence belongs to the cyanase family.

It catalyses the reaction cyanate + hydrogencarbonate + 3 H(+) = NH4(+) + 2 CO2. Functionally, catalyzes the reaction of cyanate with bicarbonate to produce ammonia and carbon dioxide. The polypeptide is Cyanate hydratase (Neosartorya fischeri (strain ATCC 1020 / DSM 3700 / CBS 544.65 / FGSC A1164 / JCM 1740 / NRRL 181 / WB 181) (Aspergillus fischerianus)).